We begin with the raw amino-acid sequence, 122 residues long: Acidic phospholipase A2 Tpu-E6b (122 aa).

7 disulfide bridges follow: C26–C115, C28–C44, C43–C95, C49–C122, C50–C88, C57–C81, and C75–C86. Residues Y27, G29, and G31 each coordinate Ca(2+). H47 is a catalytic residue. Ca(2+) is bound at residue D48. D89 is an active-site residue.

In terms of assembly, monomer. Ca(2+) serves as cofactor. As to expression, expressed by the venom gland.

The protein localises to the secreted. It catalyses the reaction a 1,2-diacyl-sn-glycero-3-phosphocholine + H2O = a 1-acyl-sn-glycero-3-phosphocholine + a fatty acid + H(+). In terms of biological role, snake venom phospholipase A2 (PLA2) that weakly inhibits ADP-induced platelet aggregation when tested on platelet rich plasma from human and rabbit blood (15-25% of inhibition at 5-10 ug of enzyme). Exhibits moderate hydrolytic activities toward L-dipalmitoyl phosphatidylcholine. PLA2 catalyzes the calcium-dependent hydrolysis of the 2-acyl groups in 3-sn-phosphoglycerides. The chain is Acidic phospholipase A2 Tpu-E6b from Craspedocephalus puniceus (Flat-nosed pitviper).